The following is a 159-amino-acid chain: Ribosomal RNA large subunit methyltransferase H (159 aa).

S-adenosyl-L-methionine is bound by residues Leu76, Gly108, and 127–132 (FSKMTF).

This sequence belongs to the RNA methyltransferase RlmH family. As to quaternary structure, homodimer.

Its subcellular location is the cytoplasm. The enzyme catalyses pseudouridine(1915) in 23S rRNA + S-adenosyl-L-methionine = N(3)-methylpseudouridine(1915) in 23S rRNA + S-adenosyl-L-homocysteine + H(+). Functionally, specifically methylates the pseudouridine at position 1915 (m3Psi1915) in 23S rRNA. This Lachnospira eligens (strain ATCC 27750 / DSM 3376 / VPI C15-48 / C15-B4) (Eubacterium eligens) protein is Ribosomal RNA large subunit methyltransferase H.